A 104-amino-acid polypeptide reads, in one-letter code: Ycf49-like protein (104 aa).

The next 3 membrane-spanning stretches (helical) occupy residues 6-26 (IPTW…IALV), 41-61 (LAWG…WHFF), and 73-93 (LQAL…WWIY).

It belongs to the ycf49 family.

It localises to the cell membrane. The chain is Ycf49-like protein from Synechocystis sp. (strain ATCC 27184 / PCC 6803 / Kazusa).